The sequence spans 101 residues: Large ribosomal subunit protein bL21 (101 aa).

The protein belongs to the bacterial ribosomal protein bL21 family. Part of the 50S ribosomal subunit. Contacts protein L20.

Its function is as follows. This protein binds to 23S rRNA in the presence of protein L20. The chain is Large ribosomal subunit protein bL21 from Metamycoplasma arthritidis (strain 158L3-1) (Mycoplasma arthritidis).